Here is an 87-residue protein sequence, read N- to C-terminus: Phytosulfokines 1 (87 aa).

The first 24 residues, 1-24 (MMKTKSEVLIFFFTLVLLLSMASS), serve as a signal peptide directing secretion. Positions 25–76 (VILREDGFAPPKPSPTTHEKASTKGDRDGVECKNSDSEEECLVKKTVAAHTD) are excised as a propeptide. The tract at residues 31–59 (GFAPPKPSPTTHEKASTKGDRDGVECKNS) is disordered. Residues 41 to 59 (THEKASTKGDRDGVECKNS) show a composition bias toward basic and acidic residues. Tyr-77 and Tyr-79 each carry sulfotyrosine. Residues 82–87 (DLNLSP) constitute a propeptide that is removed on maturation.

Belongs to the phytosulfokine family. Post-translationally, sulfation is important for activity and for the binding to a putative membrane receptor. In terms of processing, PSK-beta is produced from PSK-alpha by exopeptidase digestion. In terms of tissue distribution, expressed only in roots.

The protein localises to the secreted. Functionally, promotes plant cell differentiation, organogenesis and somatic embryogenesis as well as cell proliferation. The polypeptide is Phytosulfokines 1 (PSK1) (Arabidopsis thaliana (Mouse-ear cress)).